Consider the following 211-residue polypeptide: ATP-dependent Clp protease proteolytic subunit (211 aa).

The Nucleophile role is filled by S106. H131 is an active-site residue.

This sequence belongs to the peptidase S14 family. Fourteen ClpP subunits assemble into 2 heptameric rings which stack back to back to give a disk-like structure with a central cavity, resembling the structure of eukaryotic proteasomes.

Its subcellular location is the cytoplasm. It catalyses the reaction Hydrolysis of proteins to small peptides in the presence of ATP and magnesium. alpha-casein is the usual test substrate. In the absence of ATP, only oligopeptides shorter than five residues are hydrolyzed (such as succinyl-Leu-Tyr-|-NHMec, and Leu-Tyr-Leu-|-Tyr-Trp, in which cleavage of the -Tyr-|-Leu- and -Tyr-|-Trp bonds also occurs).. In terms of biological role, cleaves peptides in various proteins in a process that requires ATP hydrolysis. Has a chymotrypsin-like activity. Plays a major role in the degradation of misfolded proteins. In Rhodopseudomonas palustris (strain BisA53), this protein is ATP-dependent Clp protease proteolytic subunit.